A 422-amino-acid polypeptide reads, in one-letter code: Beta-1,3-galactosyltransferase 2 (422 aa).

The Cytoplasmic segment spans residues 1 to 24 (MLQWRRRHCCFAKMTWNAKRSLFR). The helical; Signal-anchor for type II membrane protein transmembrane segment at 25 to 45 (THLIGVLSLVFLFAMFLFFNH) threads the bilayer. Residues 46–422 (HDWLPGRAGF…AGRYRHRKLH (377 aa)) are Lumenal-facing. N-linked (GlcNAc...) asparagine glycosylation is found at Asn-75, Asn-100, Asn-119, Asn-176, and Asn-226. Positions 90 to 110 (TLRPQTATNSNNTDLSPQGVT) are disordered.

It belongs to the glycosyltransferase 31 family. Mn(2+) is required as a cofactor.

The protein localises to the golgi apparatus membrane. The catalysed reaction is an N-acetyl-beta-D-glucosaminyl derivative + UDP-alpha-D-galactose = a beta-D-galactosyl-(1-&gt;3)-N-acetyl-beta-D-glucosaminyl derivative + UDP + H(+). It carries out the reaction a beta-D-GlcNAc-(1-&gt;3)-beta-D-Gal-(1-&gt;4)-beta-D-Glc-(1&lt;-&gt;1)-Cer(d18:1(4E)) + UDP-alpha-D-galactose = a beta-D-Gal-(1-&gt;3)-beta-D-GlcNAc-(1-&gt;3)-beta-D-Gal-(1-&gt;4)-beta-D-Glc-(1&lt;-&gt;1')-Cer(d18:1(4E)) + UDP + H(+). It catalyses the reaction a neolactoside IV(3)-beta-GlcNAc-nLc4Cer(d18:1(4E)) + UDP-alpha-D-galactose = a neolactoside IV(3)-beta-[Gal-beta-(1-&gt;3)-GlcNAc]-nLc4Cer(d18:1(4E)) + UDP + H(+). Its pathway is protein modification; protein glycosylation. In terms of biological role, beta-1,3-galactosyltransferase that transfers galactose from UDP-galactose to substrates with a terminal beta-N-acetylglucosamine (beta-GlcNAc) residue. Can also utilize substrates with a terminal galactose residue, albeit with lower efficiency. Involved in the biosynthesis of the carbohydrate moieties of glycolipids and glycoproteins. Inactive towards substrates with terminal alpha-N-acetylglucosamine (alpha-GlcNAc) or alpha-N-acetylgalactosamine (alpha-GalNAc) residues. In Pongo abelii (Sumatran orangutan), this protein is Beta-1,3-galactosyltransferase 2 (B3GALT2).